The primary structure comprises 493 residues: Ribulose bisphosphate carboxylase large chain (493 aa).

Asparagine 132 is a substrate binding site. Cysteine 181 carries the post-translational modification S-nitrosocysteine. Residue threonine 182 coordinates substrate. Catalysis depends on lysine 184, which acts as the Proton acceptor. Lysine 186 is a substrate binding site. Lysine 210, aspartate 212, and glutamate 213 together coordinate Mg(2+). Position 210 is an N6-carboxylysine (lysine 210). Histidine 302 acts as the Proton acceptor in catalysis. Substrate is bound by residues arginine 303, histidine 335, and serine 387. Cysteine 460 is modified (S-nitrosocysteine).

The protein belongs to the RuBisCO large chain family. Type I subfamily. In terms of assembly, heterohexadecamer of 8 large chains and 8 small chains. Requires Mg(2+) as cofactor.

The protein resides in the plastid. It localises to the chloroplast. The enzyme catalyses 2 (2R)-3-phosphoglycerate + 2 H(+) = D-ribulose 1,5-bisphosphate + CO2 + H2O. It catalyses the reaction D-ribulose 1,5-bisphosphate + O2 = 2-phosphoglycolate + (2R)-3-phosphoglycerate + 2 H(+). Functionally, ruBisCO catalyzes two reactions: the carboxylation of D-ribulose 1,5-bisphosphate, the primary event in carbon dioxide fixation, as well as the oxidative fragmentation of the pentose substrate in the photorespiration process. Both reactions occur simultaneously and in competition at the same active site. Carbon dioxide and oxygen bind in the same pocket of the enzyme in a similar manner. The chain is Ribulose bisphosphate carboxylase large chain from Galdieria sulphuraria (Red alga).